The primary structure comprises 480 residues: RuvB-like helicase 2 (480 aa).

73-80 (GEPSTGKT) lines the ATP pocket.

This sequence belongs to the RuvB family. As to quaternary structure, forms homohexameric rings. May form a dodecamer with rept made of two stacked hexameric rings. Component of the chromatin remodeling Ino80 complex.

The protein resides in the nucleus. The enzyme catalyses ATP + H2O = ADP + phosphate + H(+). Functionally, acts as a transcriptional coactivator in Wg signaling caused by altered arm signaling. Pont and rept interfere antagonistically with nuclear arm signaling function, and are required to enhance or reduce arm activity, respectively. Also an essential cofactor for the normal function of Myc; required for cellular proliferation and growth. Proposed core component of the chromatin remodeling Ino80 complex which is involved in transcriptional regulation, DNA replication and probably DNA repair. This is RuvB-like helicase 2 from Drosophila pseudoobscura pseudoobscura (Fruit fly).